Here is a 124-residue protein sequence, read N- to C-terminus: Putative membrane protein insertion efficiency factor (124 aa).

The span at 1–12 shows a compositional bias: basic and acidic residues; it reads MCPQPHADHAIT. The interval 1 to 26 is disordered; the sequence is MCPQPHADHAITRGDTGAAGGRNWSG.

This sequence belongs to the UPF0161 family.

The protein resides in the cell inner membrane. Its function is as follows. Could be involved in insertion of integral membrane proteins into the membrane. The protein is Putative membrane protein insertion efficiency factor of Rhizobium meliloti (strain 1021) (Ensifer meliloti).